The sequence spans 948 residues: Coatomer subunit beta-1 (948 aa).

HEAT repeat units follow at residues 49–87, 92–126, 127–164, 274–311, 312–349, and 391–428; these read ETIPQLFITIIRYVLPSEDHTIQKLLLLYLELIEKTDSK, PEMILICQNLRNNLQHPNEYIRGVTLRFLCRMKET, EIVEPLTPSVLQNLEHRHPFVRRNAILAIMSIYKLPQG, TAIRAAANTYCQLLLSQSDNNVKLILLDRLYELKTLHR, DIMVELIIDVLRALSSPNLDIRRKTLDISLDLITHHNI, and EVASTVVHLLMDFLGDSNVASALDVVVFVREIIETNPK.

In terms of assembly, oligomeric complex that consists of at least the alpha, beta, beta', gamma, delta, epsilon and zeta subunits.

Its subcellular location is the cytoplasm. It localises to the golgi apparatus membrane. The protein resides in the cytoplasmic vesicle. It is found in the COPI-coated vesicle membrane. Its function is as follows. The coatomer is a cytosolic protein complex that binds to dilysine motifs and reversibly associates with Golgi non-clathrin-coated vesicles, which further mediate biosynthetic protein transport from the ER, via the Golgi up to the trans Golgi network. Coatomer complex is required for budding from Golgi membranes, and is essential for the retrograde Golgi-to-ER transport of dilysine-tagged proteins. The polypeptide is Coatomer subunit beta-1 (Arabidopsis thaliana (Mouse-ear cress)).